A 444-amino-acid polypeptide reads, in one-letter code: 3-phosphoshikimate 1-carboxyvinyltransferase (444 aa).

3-phosphoshikimate is bound by residues Lys24, Ser25, and Arg29. Lys24 is a phosphoenolpyruvate binding site. Phosphoenolpyruvate is bound by residues Gly97 and Arg125. 3-phosphoshikimate contacts are provided by Ser170, Gln172, Asp318, and Lys345. Gln172 contributes to the phosphoenolpyruvate binding site. Asp318 serves as the catalytic Proton acceptor. Phosphoenolpyruvate-binding residues include Arg349 and Arg391.

The protein belongs to the EPSP synthase family. Monomer.

Its subcellular location is the cytoplasm. The catalysed reaction is 3-phosphoshikimate + phosphoenolpyruvate = 5-O-(1-carboxyvinyl)-3-phosphoshikimate + phosphate. Its pathway is metabolic intermediate biosynthesis; chorismate biosynthesis; chorismate from D-erythrose 4-phosphate and phosphoenolpyruvate: step 6/7. Its function is as follows. Catalyzes the transfer of the enolpyruvyl moiety of phosphoenolpyruvate (PEP) to the 5-hydroxyl of shikimate-3-phosphate (S3P) to produce enolpyruvyl shikimate-3-phosphate and inorganic phosphate. This chain is 3-phosphoshikimate 1-carboxyvinyltransferase, found in Halorhodospira halophila (strain DSM 244 / SL1) (Ectothiorhodospira halophila (strain DSM 244 / SL1)).